The chain runs to 246 residues: Envelope glycoprotein gp95 (246 aa).

At 1-192 (IPSRPVGGPC…EWAVHLLKGL (192 aa)) the chain is on the extracellular side. Asparagine 31 is a glycosylation site (N-linked (GlcNAc...) asparagine; by host). Cysteine 50 and cysteine 86 are disulfide-bonded. Residues 58 to 78 (GPTARIFASILAPGVAAAQAL) form a fusion peptide region. Positions 75–125 (AQALKEIERLACWSVKQANLTTSLLGDLLDDVTSIRHAVLQNRAAIDFLLL) form a coiled coil. Asparagine 93 is a glycosylation site (N-linked (GlcNAc...) asparagine; by host). Positions 114-130 (LQNRAAIDFLLLAHGHG) are immunosuppression. Cysteines 131 and 138 form a disulfide. Asparagine 141 carries N-linked (GlcNAc...) asparagine; by host glycosylation. Residues 143-173 (SDHSESIQKKFQLMKEHVNKIGVDSDPIGSW) adopt a coiled-coil conformation. The helical transmembrane segment at 193–213 (LLGLVVILLLVVCLPCLLQIV) threads the bilayer. S-palmitoyl cysteine; by host attachment occurs at residues cysteine 205 and cysteine 208. Over 214 to 246 (CGNIRKMINNSISYHTEYKKLQKAYGQPESRIV) the chain is Cytoplasmic.

It belongs to the Alpharetroviruses envelope glycoprotein family. As to quaternary structure, heterodimer with the transmembrane protein. The mature envelope protein (Env) consists of a trimer of SU-TM heterodimers attached by a labile interchain disulfide bond. Heterodimer with the surface protein. The mature envelope protein (Env) consists of a trimer of SU-TM heterodimers attached by a labile interchain disulfide bond. Post-translationally, specific enzymatic cleavages in vivo yield mature proteins. Envelope glycoproteins are synthesized as an inactive precursor that is N-glycosylated and processed likely by host cell furin or by a furin-like protease in the Golgi to yield the mature SU and TM proteins. The cleavage site between SU and TM requires the minimal sequence [KR]-X-[KR]-R. The transmembrane protein is palmitoylated. Palmitoylation is necessary for glycoprotein function and infectivity.

Its subcellular location is the virion membrane. It is found in the host cell membrane. Functionally, the surface protein (SU) attaches the virus to the host cell by binding to its receptor. This interaction triggers the refolding of the transmembrane protein (TM) thereby unmasking its fusion peptide and the formation of a reactive thiolate to activate its fusogenic potential. Fusion occurs at the host cell plasma membrane. In terms of biological role, the transmembrane protein (TM) acts as a class I viral fusion protein. Under the current model, the protein has at least 3 conformational states: pre-fusion native state, pre-hairpin intermediate state, and post-fusion hairpin state. During viral and target cell membrane fusion, the coiled coil regions (heptad repeats) assume a trimer-of-hairpins structure, positioning the fusion peptide in close proximity to the C-terminal region of the ectodomain. The formation of this structure appears to drive apposition and subsequent fusion of viral and target cell membranes. Membranes fusion leads to delivery of the nucleocapsid into the cytoplasm. The protein is Envelope glycoprotein gp95 (env) of Galliformes.